The following is a 330-amino-acid chain: 4-hydroxythreonine-4-phosphate dehydrogenase (330 aa).

Residues histidine 134 and threonine 135 each coordinate substrate. A divalent metal cation contacts are provided by histidine 163, histidine 208, and histidine 263. Lysine 271, asparagine 280, and arginine 289 together coordinate substrate.

This sequence belongs to the PdxA family. Homodimer. Zn(2+) is required as a cofactor. The cofactor is Mg(2+). Co(2+) serves as cofactor.

Its subcellular location is the cytoplasm. The enzyme catalyses 4-(phosphooxy)-L-threonine + NAD(+) = 3-amino-2-oxopropyl phosphate + CO2 + NADH. It functions in the pathway cofactor biosynthesis; pyridoxine 5'-phosphate biosynthesis; pyridoxine 5'-phosphate from D-erythrose 4-phosphate: step 4/5. Functionally, catalyzes the NAD(P)-dependent oxidation of 4-(phosphooxy)-L-threonine (HTP) into 2-amino-3-oxo-4-(phosphooxy)butyric acid which spontaneously decarboxylates to form 3-amino-2-oxopropyl phosphate (AHAP). The chain is 4-hydroxythreonine-4-phosphate dehydrogenase from Methylococcus capsulatus (strain ATCC 33009 / NCIMB 11132 / Bath).